We begin with the raw amino-acid sequence, 95 residues long: Large ribosomal subunit protein uL23 (95 aa).

The protein belongs to the universal ribosomal protein uL23 family. In terms of assembly, part of the 50S ribosomal subunit. Contacts protein L29, and trigger factor when it is bound to the ribosome.

One of the early assembly proteins it binds 23S rRNA. One of the proteins that surrounds the polypeptide exit tunnel on the outside of the ribosome. Forms the main docking site for trigger factor binding to the ribosome. The chain is Large ribosomal subunit protein uL23 from Rubrobacter xylanophilus (strain DSM 9941 / JCM 11954 / NBRC 16129 / PRD-1).